The sequence spans 390 residues: 8-amino-7-oxononanoate synthase (390 aa).

Arginine 19 is a substrate binding site. 106-107 is a binding site for pyridoxal 5'-phosphate; sequence GY. Histidine 131 is a binding site for substrate. Pyridoxal 5'-phosphate is bound by residues serine 176, histidine 204, and threonine 233. Lysine 236 carries the N6-(pyridoxal phosphate)lysine modification. Residue threonine 350 coordinates substrate.

The protein belongs to the class-II pyridoxal-phosphate-dependent aminotransferase family. BioF subfamily. As to quaternary structure, homodimer. Pyridoxal 5'-phosphate is required as a cofactor.

It carries out the reaction 6-carboxyhexanoyl-[ACP] + L-alanine + H(+) = (8S)-8-amino-7-oxononanoate + holo-[ACP] + CO2. It participates in cofactor biosynthesis; biotin biosynthesis. Functionally, catalyzes the decarboxylative condensation of pimeloyl-[acyl-carrier protein] and L-alanine to produce 8-amino-7-oxononanoate (AON), [acyl-carrier protein], and carbon dioxide. The chain is 8-amino-7-oxononanoate synthase from Pseudomonas putida (strain W619).